Consider the following 529-residue polypeptide: Putative cysteine ligase BshC (529 aa).

A coiled-coil region spans residues 450–485 (VKQTKGLENLEKRLLKAQKRNLSDQLQRVIDLQCEL).

The protein belongs to the BshC family.

The sequence is that of Putative cysteine ligase BshC from Flavobacterium johnsoniae (strain ATCC 17061 / DSM 2064 / JCM 8514 / BCRC 14874 / CCUG 350202 / NBRC 14942 / NCIMB 11054 / UW101) (Cytophaga johnsonae).